Consider the following 481-residue polypeptide: Xylulose kinase (481 aa).

81–82 contributes to the substrate binding site; sequence QH. Aspartate 239 serves as the catalytic Proton acceptor.

Belongs to the FGGY kinase family.

The catalysed reaction is D-xylulose + ATP = D-xylulose 5-phosphate + ADP + H(+). Functionally, catalyzes the phosphorylation of D-xylulose to D-xylulose 5-phosphate. This chain is Xylulose kinase, found in Streptomyces coelicolor (strain ATCC BAA-471 / A3(2) / M145).